A 92-amino-acid chain; its full sequence is Small ribosomal subunit protein uS19 (92 aa).

It belongs to the universal ribosomal protein uS19 family.

In terms of biological role, protein S19 forms a complex with S13 that binds strongly to the 16S ribosomal RNA. This chain is Small ribosomal subunit protein uS19, found in Borrelia recurrentis (strain A1).